A 339-amino-acid polypeptide reads, in one-letter code: Cobalt-precorrin-5B C(1)-methyltransferase (339 aa).

It belongs to the CbiD family.

The catalysed reaction is Co-precorrin-5B + S-adenosyl-L-methionine = Co-precorrin-6A + S-adenosyl-L-homocysteine. Its pathway is cofactor biosynthesis; adenosylcobalamin biosynthesis; cob(II)yrinate a,c-diamide from sirohydrochlorin (anaerobic route): step 6/10. Catalyzes the methylation of C-1 in cobalt-precorrin-5B to form cobalt-precorrin-6A. The sequence is that of Cobalt-precorrin-5B C(1)-methyltransferase from Methanosarcina acetivorans (strain ATCC 35395 / DSM 2834 / JCM 12185 / C2A).